The primary structure comprises 221 residues: Chalcone--flavanone isomerase (221 aa).

Substrate contacts are provided by Thr-47, Asn-112, and Ser-189.

It belongs to the chalcone isomerase family.

The catalysed reaction is a chalcone = a flavanone.. Its pathway is secondary metabolite biosynthesis; flavonoid biosynthesis. In terms of biological role, catalyzes the intramolecular cyclization of bicyclic chalcones into tricyclic (S)-flavanones. Responsible for the isomerization of 4,2',4',6'-tetrahydroxychalcone (also termed chalcone) into naringenin. The polypeptide is Chalcone--flavanone isomerase (CHI) (Dianthus caryophyllus (Carnation)).